The primary structure comprises 229 residues: Cytochrome c oxidase subunit 2 (229 aa).

Topologically, residues 1-14 are mitochondrial intermembrane; that stretch reads MAQQAQLGLQDAAS. A helical transmembrane segment spans residues 15–45; it reads PIMEELIHFHDHTLTVVFLISVLIFYLIIVM. Residues 46–59 lie on the Mitochondrial matrix side of the membrane; that stretch reads VTTTFMNKHSLDSQ. Residues 60-87 form a helical membrane-spanning segment; it reads EVEIVWTVMPAIVLITIALPSLRILYLT. Residues 88–229 are Mitochondrial intermembrane-facing; that stretch reads DEISNPHLTI…ENWTTKVLAS (142 aa). 6 residues coordinate Cu cation: His-161, Cys-196, Glu-198, Cys-200, His-204, and Met-207. Mg(2+) is bound at residue Glu-198.

The protein belongs to the cytochrome c oxidase subunit 2 family. As to quaternary structure, component of the cytochrome c oxidase (complex IV, CIV), a multisubunit enzyme composed of 14 subunits. The complex is composed of a catalytic core of 3 subunits MT-CO1, MT-CO2 and MT-CO3, encoded in the mitochondrial DNA, and 11 supernumerary subunits COX4I, COX5A, COX5B, COX6A, COX6B, COX6C, COX7A, COX7B, COX7C, COX8 and NDUFA4, which are encoded in the nuclear genome. The complex exists as a monomer or a dimer and forms supercomplexes (SCs) in the inner mitochondrial membrane with NADH-ubiquinone oxidoreductase (complex I, CI) and ubiquinol-cytochrome c oxidoreductase (cytochrome b-c1 complex, complex III, CIII), resulting in different assemblies (supercomplex SCI(1)III(2)IV(1) and megacomplex MCI(2)III(2)IV(2)). Found in a complex with TMEM177, COA6, COX18, COX20, SCO1 and SCO2. Interacts with TMEM177 in a COX20-dependent manner. Interacts with COX20. Interacts with COX16. It depends on Cu cation as a cofactor.

The protein resides in the mitochondrion inner membrane. The enzyme catalyses 4 Fe(II)-[cytochrome c] + O2 + 8 H(+)(in) = 4 Fe(III)-[cytochrome c] + 2 H2O + 4 H(+)(out). Component of the cytochrome c oxidase, the last enzyme in the mitochondrial electron transport chain which drives oxidative phosphorylation. The respiratory chain contains 3 multisubunit complexes succinate dehydrogenase (complex II, CII), ubiquinol-cytochrome c oxidoreductase (cytochrome b-c1 complex, complex III, CIII) and cytochrome c oxidase (complex IV, CIV), that cooperate to transfer electrons derived from NADH and succinate to molecular oxygen, creating an electrochemical gradient over the inner membrane that drives transmembrane transport and the ATP synthase. Cytochrome c oxidase is the component of the respiratory chain that catalyzes the reduction of oxygen to water. Electrons originating from reduced cytochrome c in the intermembrane space (IMS) are transferred via the dinuclear copper A center (CU(A)) of subunit 2 and heme A of subunit 1 to the active site in subunit 1, a binuclear center (BNC) formed by heme A3 and copper B (CU(B)). The BNC reduces molecular oxygen to 2 water molecules using 4 electrons from cytochrome c in the IMS and 4 protons from the mitochondrial matrix. This chain is Cytochrome c oxidase subunit 2 (MT-CO2), found in Petromyzon marinus (Sea lamprey).